A 153-amino-acid chain; its full sequence is Small ribosomal subunit protein bS6 (153 aa).

A disordered region spans residues Glu97–Glu153. A compositionally biased stretch (basic and acidic residues) spans Arg105–Glu147.

Belongs to the bacterial ribosomal protein bS6 family.

Binds together with bS18 to 16S ribosomal RNA. This Bradyrhizobium sp. (strain BTAi1 / ATCC BAA-1182) protein is Small ribosomal subunit protein bS6.